Consider the following 408-residue polypeptide: Prenyltransferase criF (408 aa).

Residues Arg94, Lys181, Tyr183, Arg248, Lys250, Tyr252, Gln334, Tyr336, Tyr400, and Tyr404 each coordinate dimethylallyl diphosphate.

The protein belongs to the tryptophan dimethylallyltransferase family. As to quaternary structure, homodimer.

The enzyme catalyses preechinulin + dimethylallyl diphosphate = tardioxopiperazine B + diphosphate. It carries out the reaction preechinulin + dimethylallyl diphosphate = tardioxopiperazine A + diphosphate. It catalyses the reaction tardioxopiperazine A + dimethylallyl diphosphate = echinulin + diphosphate. The catalysed reaction is tardioxopiperazine A + dimethylallyl diphosphate = variecolorin L + diphosphate. The enzyme catalyses neoechinulin A + dimethylallyl diphosphate = variecolorin G + diphosphate. It carries out the reaction neoechinulin A + dimethylallyl diphosphate = isoechinulin A + diphosphate. It catalyses the reaction isoechinulin A + dimethylallyl diphosphate = dehydroechinulin + diphosphate. The catalysed reaction is neoechinulin B + dimethylallyl diphosphate = isoechinulin B + diphosphate. It functions in the pathway secondary metabolite biosynthesis. The protein operates within alkaloid biosynthesis. Its function is as follows. Prenyltransferase; part of the gene cluster that mediates the biosynthesis of echinulin family alkaloid. The pathway begins with the biosynthesis of the cyclic dipeptide cyclo-L-Trp-L-Ala (cyclo-TA) by the NRPS criC via condensation of L-alanine and L-tryptophan. The prenyltransferase criA then catalyzes the first prenylation step, a reverse prenylation reaction at C2, to yield preechinulin. Preechinulin is the substrate of the cytochrome P450 monooxygenase criE that catalyzes the formation of the double bond between C10 and C11 to produce neoechulin A. The unique prenyltransferase criF functions as a competitive enzyme with criE for preechinulin metabolization and uses preechinulin for effective regiospecific prenylations. Preechinulin is prenylated by criF at C5 or C7. C7-prenylation leads to accumulation of tardioxopiperazine B without further modification by criF. In contrast, the C5-prenylated tardioxopiperazine A can be prenylated again by criF, predominantly at C7 to form echinulin or less frequently at C4 to give variecolorin L. CriF also accepts neoechilunin A to produce varlecolorin G (prenylation at C5) or isoechinulin A (prenylation at C7). CriF further converts isoechinulin A into dehydroechinulin. Moreover, a yet unidentified enzyme can also convert neoechilunin A into neoechilunin B by introducing a double bond between positions C14 and C17 and thus provides a further substrate to criF for C5 and C7 prenylation. This is Prenyltransferase criF from Aspergillus cristatus (Chinese Fuzhuan brick tea-fermentation fungus).